A 430-amino-acid chain; its full sequence is Type 3 secretion system ATPase (430 aa).

162–167 (GCGKTF) is a binding site for ATP.

The protein belongs to the ATPase alpha/beta chains family. T3SS ATPase subfamily. As to quaternary structure, the core secretion machinery of the T3SS is composed of approximately 20 different proteins, including cytoplasmic components, a base, an export apparatus and a needle. This subunit is part of the cytosolic complex. Forms homohexamers. Interacts directly with MxiN/SctL (stator protein) and Spa13/SctO (stalk protein). Can form a soluble complex with Spa33/SctQ, MxiN/SctL and MxiK/SctK.

It is found in the cytoplasm. It catalyses the reaction ATP + H2O + cellular proteinSide 1 = ADP + phosphate + cellular proteinSide 2.. With respect to regulation, oligomerization increases ATPase activity. Monomeric forms exhibit low-level ATPase activity by forming short-lived oligomers with active site contributions from at least two protomers. In contrast, oligomers exhibit enhanced ATP hydrolysis rates that likely result from multiple preformed active sites within the oligomeric complex. Oligomerization is important for both enzyme activation and T3SS function. Activity is regulated by MxiN/SctL, which differentially regulates the activity of the monomer and the oligomer: it up-regulates the ATPase activity of the monomer, while it down-regulates the activity of the oligomer. Functionally, ATPase component of the type III secretion system (T3SS), also called injectisome, which is used to inject bacterial effector proteins into eukaryotic host cells. Acts as a molecular motor to provide the energy that is required for the export of proteins. Required for type III secretion apparatus (T3SA) formation, proper protein secretion, host cell invasion and virulence. May play a critical role in T3SS substrate recognition, disassembly of the effector/chaperone complex and unfolding of the effector in an ATP-dependent manner prior to secretion. The polypeptide is Type 3 secretion system ATPase (Shigella flexneri).